Consider the following 178-residue polypeptide: MHSSALLCCLVFLTGVRASPGQGTQSENSCTHFPGSLPHMLRELRVAFGRVKTFFQKKDQLDSMLLKESLLEDFKGYLGCQALSEMIQFYLEEVMPQAENHDPDIKEHVNSLGEKLKTFRLRLRRCHRFLPCENKSKAVAQVKNAVSKLQEKGVYKAMSEFDIFIDYIEAYMTMKTQN.

An N-terminal signal peptide occupies residues 1 to 18 (MHSSALLCCLVFLTGVRA). Intrachain disulfides connect Cys30–Cys126 and Cys80–Cys132. The N-linked (GlcNAc...) asparagine glycan is linked to Asn134.

This sequence belongs to the IL-10 family. In terms of assembly, homodimer. Interacts with IL10RA and IL10RB.

Its subcellular location is the secreted. Major immune regulatory cytokine that acts on many cells of the immune system where it has profound anti-inflammatory functions, limiting excessive tissue disruption caused by inflammation. Mechanistically, IL10 binds to its heterotetrameric receptor comprising IL10RA and IL10RB leading to JAK1 and STAT2-mediated phosphorylation of STAT3. In turn, STAT3 translocates to the nucleus where it drives expression of anti-inflammatory mediators. Targets antigen-presenting cells (APCs) such as macrophages and monocytes and inhibits their release of pro-inflammatory cytokines including granulocyte-macrophage colony-stimulating factor /GM-CSF, granulocyte colony-stimulating factor/G-CSF, IL-1 alpha, IL-1 beta, IL-6, IL-8 and TNF-alpha. Also interferes with antigen presentation by reducing the expression of MHC-class II and co-stimulatory molecules, thereby inhibiting their ability to induce T cell activation. In addition, controls the inflammatory response of macrophages by reprogramming essential metabolic pathways including mTOR signaling. The sequence is that of Interleukin-10 (IL10) from Saimiri sciureus (Common squirrel monkey).